The sequence spans 182 residues: Ribosome maturation factor RimM (182 aa).

The PRC barrel domain maps to 103–182 (EDDYYWKDLM…RVEVDWDPGF (80 aa)).

It belongs to the RimM family. Binds ribosomal protein uS19.

It localises to the cytoplasm. Functionally, an accessory protein needed during the final step in the assembly of 30S ribosomal subunit, possibly for assembly of the head region. Essential for efficient processing of 16S rRNA. May be needed both before and after RbfA during the maturation of 16S rRNA. It has affinity for free ribosomal 30S subunits but not for 70S ribosomes. The protein is Ribosome maturation factor RimM of Yersinia enterocolitica serotype O:8 / biotype 1B (strain NCTC 13174 / 8081).